A 277-amino-acid chain; its full sequence is Translation initiation factor 2 subunit alpha (277 aa).

One can recognise an S1 motif domain in the interval glycine 22–lysine 93.

It belongs to the eIF-2-alpha family. Heterotrimer composed of an alpha, a beta and a gamma chain.

In terms of biological role, eIF-2 functions in the early steps of protein synthesis by forming a ternary complex with GTP and initiator tRNA. This is Translation initiation factor 2 subunit alpha (eif2a) from Aeropyrum pernix (strain ATCC 700893 / DSM 11879 / JCM 9820 / NBRC 100138 / K1).